Consider the following 298-residue polypeptide: Protease HtpX homolog (298 aa).

Transmembrane regions (helical) follow at residues 14–34 and 39–59; these read VVLLVVFFALLALIGASAGYL and YAMGLVLALVIGVIYATSMIF. Residue His-143 participates in Zn(2+) binding. Glu-144 is an active-site residue. Zn(2+) is bound at residue His-147. Transmembrane regions (helical) follow at residues 158-178 and 197-217; these read IAVALASAVTVISSIGGRMLW and IITLLLSLLSLLLAPLVASLI. Glu-226 contacts Zn(2+).

The protein belongs to the peptidase M48B family. It depends on Zn(2+) as a cofactor.

It is found in the cell membrane. This chain is Protease HtpX homolog, found in Streptococcus pyogenes serotype M1.